We begin with the raw amino-acid sequence, 249 residues long: Diaminopimelate epimerase (249 aa).

Substrate is bound by residues Asn11 and Asn60. Residue Cys69 is the Proton donor of the active site. Residues 70 to 71, Asn164, and 182 to 183 contribute to the substrate site; these read GN and ER. Cys192 (proton acceptor) is an active-site residue. 193–194 is a substrate binding site; sequence GT.

Belongs to the diaminopimelate epimerase family. As to quaternary structure, homodimer.

It localises to the cytoplasm. The enzyme catalyses (2S,6S)-2,6-diaminopimelate = meso-2,6-diaminopimelate. It participates in amino-acid biosynthesis; L-lysine biosynthesis via DAP pathway; DL-2,6-diaminopimelate from LL-2,6-diaminopimelate: step 1/1. In terms of biological role, catalyzes the stereoinversion of LL-2,6-diaminopimelate (L,L-DAP) to meso-diaminopimelate (meso-DAP), a precursor of L-lysine and an essential component of the bacterial peptidoglycan. The polypeptide is Diaminopimelate epimerase (Campylobacter jejuni subsp. doylei (strain ATCC BAA-1458 / RM4099 / 269.97)).